Reading from the N-terminus, the 63-residue chain is uncharacterized protein (63 aa).

This is an uncharacterized protein from Avena byzantina (Oat).